Here is a 53-residue protein sequence, read N- to C-terminus: Metallothionein (53 aa).

Belongs to the metallothionein superfamily. Type 14 family.

This protein complexes cadmium, zinc and copper. The sequence is that of Metallothionein from Synechococcus sp.